The sequence spans 291 residues: Nitrogenase iron protein (291 aa).

11 to 18 (GKGGIGKS) lines the ATP pocket. Cys-99 contributes to the [4Fe-4S] cluster binding site. Arg-102 bears the ADP-ribosylarginine; by dinitrogenase reductase ADP-ribosyltransferase mark. Cys-133 lines the [4Fe-4S] cluster pocket.

The protein belongs to the NifH/BchL/ChlL family. Homodimer. Requires [4Fe-4S] cluster as cofactor. Post-translationally, the reversible ADP-ribosylation of Arg-102 inactivates the nitrogenase reductase and regulates nitrogenase activity.

The catalysed reaction is N2 + 8 reduced [2Fe-2S]-[ferredoxin] + 16 ATP + 16 H2O = H2 + 8 oxidized [2Fe-2S]-[ferredoxin] + 2 NH4(+) + 16 ADP + 16 phosphate + 6 H(+). In terms of biological role, the key enzymatic reactions in nitrogen fixation are catalyzed by the nitrogenase complex, which has 2 components: the iron protein and the molybdenum-iron protein. The protein is Nitrogenase iron protein of Cereibacter sphaeroides (strain ATCC 17023 / DSM 158 / JCM 6121 / CCUG 31486 / LMG 2827 / NBRC 12203 / NCIMB 8253 / ATH 2.4.1.) (Rhodobacter sphaeroides).